Reading from the N-terminus, the 865-residue chain is Carbohydrate-responsive element-binding protein (865 aa).

2 disordered regions span residues 15 to 41 and 53 to 77; these read PRVV…AGGL and MVSS…LADF. Residues serine 20, serine 23, and serine 25 each carry the phosphoserine modification. Threonine 27 carries the phosphothreonine modification. Serine 196 carries the phosphoserine modification. Disordered regions lie at residues 334–392 and 500–653; these read GILG…TKMP and QPRC…LSRG. Positions 351–368 are enriched in polar residues; sequence GMTPLSGNTRLQARNSCS. Positions 515–533 are enriched in low complexity; that stretch reads ASPPTLTSATASPTATATA. A Phosphoserine; by AMPK modification is found at serine 568. Residues 583-597 are compositionally biased toward pro residues; the sequence is PPIPAPTPPRPPPGP. A phosphoserine mark is found at serine 615, serine 627, and serine 644. In terms of domain architecture, bHLH spans 662 to 716; it reads NRRITHISAEQKRRFNIKLGFDTLHGLVSTLSAQPSLKVSKATTLQKTAEYILML. The leucine-zipper stretch occupies residues 716–737; sequence LQQERAAMQEEAQQLRDEIEEL.

As to quaternary structure, binds DNA as a heterodimer with TCFL4/MLX. Post-translationally, phosphorylation at Ser-568 by AMPK inactivates the DNA-binding activity.

The protein localises to the nucleus. In terms of biological role, transcriptional repressor. Binds to the canonical and non-canonical E box sequences 5'-CACGTG-3'. The sequence is that of Carbohydrate-responsive element-binding protein (Mlxipl) from Rattus norvegicus (Rat).